A 99-amino-acid chain; its full sequence is Aspartyl/glutamyl-tRNA(Asn/Gln) amidotransferase subunit C (99 aa).

It belongs to the GatC family. As to quaternary structure, heterotrimer of A, B and C subunits.

It catalyses the reaction L-glutamyl-tRNA(Gln) + L-glutamine + ATP + H2O = L-glutaminyl-tRNA(Gln) + L-glutamate + ADP + phosphate + H(+). The enzyme catalyses L-aspartyl-tRNA(Asn) + L-glutamine + ATP + H2O = L-asparaginyl-tRNA(Asn) + L-glutamate + ADP + phosphate + 2 H(+). Allows the formation of correctly charged Asn-tRNA(Asn) or Gln-tRNA(Gln) through the transamidation of misacylated Asp-tRNA(Asn) or Glu-tRNA(Gln) in organisms which lack either or both of asparaginyl-tRNA or glutaminyl-tRNA synthetases. The reaction takes place in the presence of glutamine and ATP through an activated phospho-Asp-tRNA(Asn) or phospho-Glu-tRNA(Gln). The protein is Aspartyl/glutamyl-tRNA(Asn/Gln) amidotransferase subunit C of Macrococcus caseolyticus (strain JCSC5402) (Macrococcoides caseolyticum).